The primary structure comprises 231 residues: Ion-translocating oxidoreductase complex subunit E (231 aa).

The next 6 helical transmembrane spans lie at 18–38 (ALVQ…ATNA), 39–59 (LGLG…ISTL), 63–83 (TPAE…VSAV), 86–106 (LINA…PLIV), 125–145 (ALSA…MFVL), and 182–202 (PFLL…MLAG).

This sequence belongs to the NqrDE/RnfAE family. The complex is composed of six subunits: RsxA, RsxB, RsxC, RsxD, RsxE and RsxG.

The protein resides in the cell inner membrane. Its function is as follows. Part of a membrane-bound complex that couples electron transfer with translocation of ions across the membrane. Required to maintain the reduced state of SoxR. In Escherichia coli O6:H1 (strain CFT073 / ATCC 700928 / UPEC), this protein is Ion-translocating oxidoreductase complex subunit E.